We begin with the raw amino-acid sequence, 375 residues long: MTEPIESIEVSLGDRSYPIWISTGLTESAEQPHFAKHFQAAVGDCTHVVLIHDAAVSNTIASRVEKQLEQAGIRITSISIPSGETSKSVSKLESIWNVMLESGTDRRSVVVAVGGGVVGDLAGFAAASFTRGLRFVQVPTTLLSMVDSSVGGKTGINLPGGKNMVGSFWQPQMVWIDTQSLSTLPDRDFISGMAEVIKYGVIEDAEFFCWLQDKAARLIEKDPETLRYAIRKSCESKARVVAEDERETSGRRAILNYGHTFAHAIEATAGYGVCLHGEAVSIGMQMAAHLAIDMELCDRSLLEEQTAVLSAAKLPLAWKDADPEKMLPVMSHDKKVSHGKLRFVLPDRIGHVAMVGDVPSEKVIAAILACRDEPN.

NAD(+)-binding positions include 82-87 (SGETSK), 116-120 (GVVGD), 140-141 (TT), Lys-153, and Lys-162. Zn(2+) is bound by residues Glu-195, His-259, and His-276.

It belongs to the sugar phosphate cyclases superfamily. Dehydroquinate synthase family. NAD(+) is required as a cofactor. Co(2+) serves as cofactor. It depends on Zn(2+) as a cofactor.

The protein resides in the cytoplasm. It carries out the reaction 7-phospho-2-dehydro-3-deoxy-D-arabino-heptonate = 3-dehydroquinate + phosphate. The protein operates within metabolic intermediate biosynthesis; chorismate biosynthesis; chorismate from D-erythrose 4-phosphate and phosphoenolpyruvate: step 2/7. Functionally, catalyzes the conversion of 3-deoxy-D-arabino-heptulosonate 7-phosphate (DAHP) to dehydroquinate (DHQ). The polypeptide is 3-dehydroquinate synthase (Rhodopirellula baltica (strain DSM 10527 / NCIMB 13988 / SH1)).